The chain runs to 172 residues: Biogenesis of lysosome-related organelles complex 1 subunit 6 (172 aa).

Positions 1–10 (MNVPVPPPPD) are enriched in pro residues. 2 disordered regions span residues 1–35 (MNVPVPPPPDGVLTGPSDSLEAGEPTPGLSDRSPD) and 136–172 (ALKLQQQRQKEELEREQQREREFEREKQLTAKPAKRT). Basic and acidic residues predominate over residues 143–164 (RQKEELEREQQREREFEREKQL).

Belongs to the BLOC1S6 family. As to quaternary structure, homodimer. Octamer composed of one copy each BLOC1S1, BLOC1S2, BLOC1S3, BLOC1S4, BLOC1S5, BLOC1S6, DTNBP1/BLOC1S7 and SNAPIN/BLOC1S8. The BLOC-1 complex associates with the AP-3 protein complex and membrane protein cargos. Interacts with BLOC1S4, BLOC1S5, DTNBP1/BLOC1S7, F-actin, SNAP25 isoform 1 and isoform 2, SNAP47 and STX12. Component of the biogenesis of lysosome-related organelles complex 1 (BLOC-1) composed of BLOC1S1, BLOC1S2, BLOC1S3, BLOC1S4, BLOC1S5, BLOC1S6, DTNBP1/BLOC1S7 and SNAPIN/BLOC1S8.

It is found in the cytoplasm. The protein localises to the membrane. In terms of biological role, component of the BLOC-1 complex, a complex that is required for normal biogenesis of lysosome-related organelles (LRO), such as platelet dense granules and melanosomes. In concert with the AP-3 complex, the BLOC-1 complex is required to target membrane protein cargos into vesicles assembled at cell bodies for delivery into neurites and nerve terminals. The BLOC-1 complex, in association with SNARE proteins, is also proposed to be involved in neurite extension. May play a role in intracellular vesicle trafficking, particularly in the vesicle-docking and fusion process. This chain is Biogenesis of lysosome-related organelles complex 1 subunit 6 (Bloc1s6), found in Rattus norvegicus (Rat).